Here is a 223-residue protein sequence, read N- to C-terminus: Endonuclease V (223 aa).

Residues aspartate 44 and aspartate 109 each coordinate Mg(2+).

This sequence belongs to the endonuclease V family. Mg(2+) is required as a cofactor.

The protein localises to the cytoplasm. It catalyses the reaction Endonucleolytic cleavage at apurinic or apyrimidinic sites to products with a 5'-phosphate.. Its function is as follows. DNA repair enzyme involved in the repair of deaminated bases. Selectively cleaves double-stranded DNA at the second phosphodiester bond 3' to a deoxyinosine leaving behind the intact lesion on the nicked DNA. This Methanothrix thermoacetophila (strain DSM 6194 / JCM 14653 / NBRC 101360 / PT) (Methanosaeta thermophila) protein is Endonuclease V.